An 80-amino-acid chain; its full sequence is Conotoxin Bu14 (80 aa).

An N-terminal signal peptide occupies residues 1-8 (AACQLGTA). Residues 9–40 (ASFARDKQDYPAVRSDGRQDSKDSTLDRIAKR) constitute a propeptide that is removed on maturation. 3 disulfides stabilise this stretch: Cys41/Cys55, Cys48/Cys59, and Cys54/Cys69.

It belongs to the conotoxin O1 superfamily. As to expression, expressed by the venom duct.

It localises to the secreted. The protein is Conotoxin Bu14 of Conus bullatus (Bubble cone).